The chain runs to 34 residues: Photosystem II reaction center protein Y (34 aa).

Topologically, residues 1-5 (DWRVL) are lumenal. Residues 6–22 (VVLLPVLLAAGWAVRNI) traverse the membrane as a helical segment. Over 23-34 (LPYAVKQVQKLL) the chain is Cytoplasmic.

Belongs to the PsbY family. PSII is composed of 1 copy each of membrane proteins PsbA, PsbB, PsbC, PsbD, PsbE, PsbF, PsbH, PsbI, PsbJ, PsbK, PsbL, PsbM, PsbT, PsbX, PsbY, PsbZ, Psb30/Ycf12, peripheral proteins PsbO, CyanoQ (PsbQ), PsbU, PsbV and a large number of cofactors. It forms dimeric complexes. This protein is only loosely associated with PSII, and is not often found in crystals. The cofactor is PSII binds multiple chlorophylls, carotenoids and specific lipids..

Its subcellular location is the cellular thylakoid membrane. Loosely associated component of the core of photosystem II (PSII). PSII is a light-driven water plastoquinone oxidoreductase, using light energy to abstract electrons from H(2)O, generating a proton gradient subsequently used for ATP formation. The polypeptide is Photosystem II reaction center protein Y (Thermostichus vulcanus (Synechococcus vulcanus)).